The chain runs to 345 residues: uncharacterized protein (345 aa).

PDZ GRASP-type domains lie at 27 to 112 and 118 to 207; these read CGFR…WASI and AIWH…HGVL. A GRASP region spans residues 27-223; that stretch reads CGFRVLKVEN…LSGPPPQPGD (197 aa). The segment at 229-345 is disordered; that stretch reads PMLGGPDHKV…APQNEELVKN (117 aa). The segment covering 297-308 has biased composition (basic and acidic residues); sequence KLSRELDHKTKD. Composition is skewed to polar residues over residues 309–318 and 328–338; these read ASSTNDSQTT and VNSTNDESAPQ.

It is found in the golgi apparatus membrane. This is an uncharacterized protein from Schizosaccharomyces pombe (strain 972 / ATCC 24843) (Fission yeast).